A 149-amino-acid chain; its full sequence is Large ribosomal subunit protein uL13 (149 aa).

This sequence belongs to the universal ribosomal protein uL13 family. Part of the 50S ribosomal subunit.

Functionally, this protein is one of the early assembly proteins of the 50S ribosomal subunit, although it is not seen to bind rRNA by itself. It is important during the early stages of 50S assembly. In Chlorobium chlorochromatii (strain CaD3), this protein is Large ribosomal subunit protein uL13.